The primary structure comprises 236 residues: Biosynthetic peptidoglycan transglycosylase (236 aa).

Residues 12-31 (ALLWFVAGSIVLVLVFRWVP) traverse the membrane as a helical segment.

It belongs to the glycosyltransferase 51 family.

The protein resides in the cell inner membrane. The catalysed reaction is [GlcNAc-(1-&gt;4)-Mur2Ac(oyl-L-Ala-gamma-D-Glu-L-Lys-D-Ala-D-Ala)](n)-di-trans,octa-cis-undecaprenyl diphosphate + beta-D-GlcNAc-(1-&gt;4)-Mur2Ac(oyl-L-Ala-gamma-D-Glu-L-Lys-D-Ala-D-Ala)-di-trans,octa-cis-undecaprenyl diphosphate = [GlcNAc-(1-&gt;4)-Mur2Ac(oyl-L-Ala-gamma-D-Glu-L-Lys-D-Ala-D-Ala)](n+1)-di-trans,octa-cis-undecaprenyl diphosphate + di-trans,octa-cis-undecaprenyl diphosphate + H(+). It functions in the pathway cell wall biogenesis; peptidoglycan biosynthesis. Its function is as follows. Peptidoglycan polymerase that catalyzes glycan chain elongation from lipid-linked precursors. The protein is Biosynthetic peptidoglycan transglycosylase of Pseudomonas putida (strain ATCC 47054 / DSM 6125 / CFBP 8728 / NCIMB 11950 / KT2440).